Reading from the N-terminus, the 520-residue chain is Poly(A)-specific ribonuclease PNLDC1 (520 aa).

4 residues coordinate Mg(2+): Asp-17, Glu-19, Asp-260, and Asp-354. A helical membrane pass occupies residues 495–515 (VNCLLQVCGIVTAWALLAFIL).

It belongs to the CAF1 family. Mg(2+) is required as a cofactor.

The protein resides in the endoplasmic reticulum membrane. It catalyses the reaction Exonucleolytic cleavage of poly(A) to 5'-AMP.. Its function is as follows. 3'-exoribonuclease that has a preference for poly(A) tails of mRNAs, thereby efficiently degrading poly(A) tails. Exonucleolytic degradation of the poly(A) tail is often the first step in the decay of eukaryotic mRNAs and is also used to silence certain maternal mRNAs translationally during oocyte maturation and early embryonic development. May act as a regulator of multipotency in embryonic stem cells. Is a critical factor for proper spermatogenesis, involved in pre-piRNAs processing to generate mature piRNAs. This chain is Poly(A)-specific ribonuclease PNLDC1, found in Homo sapiens (Human).